Consider the following 200-residue polypeptide: Inducible T-cell costimulator (200 aa).

Positions 1 to 20 (MKPYFCRVFVFCFLIRLLTG) are cleaved as a signal peptide. At 21–144 (EINGSADHRM…QLCCQLKLWL (124 aa)) the chain is on the extracellular side. N-linked (GlcNAc...) asparagine glycosylation is present at Asn-23. The region spanning 30–133 (MFSFHNGGVQ…LSGGYLHIYE (104 aa)) is the Ig-like V-type domain. Intrachain disulfides connect Cys-42/Cys-109 and Cys-63/Cys-83. 2 N-linked (GlcNAc...) asparagine glycosylation sites follow: Asn-89 and Asn-123. Residues 145–165 (PVGCAAFVVVLLFGCILIIWF) form a helical membrane-spanning segment. At 166-200 (SKKKYGSSVHDPNSEYMFMAAVNTNKKSRLAGVTS) the chain is on the cytoplasmic side.

As to quaternary structure, homodimer; disulfide-linked. Interacts with ICOSLG. Interacts with PIK3R1. Interacts with TBK1; this interaction is critical for the maturation of T follicular regulatory cells. N-glycosylated. Expressed on activated T-cells and resting memory T-cells. High expression seen in the thymic medulla and in the germinal centers and T-cell zones of lymph nodes and Peyer patches. Expressed at low levels in the spleen.

The protein resides in the cell membrane. Functionally, stimulatory receptor expressed in activated or antigen-experienced T-cells that plays an important role in the immune response. Upon binding to its ligand ICOSL expressed on antigen presenting cells (APCs), delivers costimulatory signals that enhances all basic T-cell responses to a foreign antigen, namely proliferation, secretion of lymphokines including IL10, up-regulation of molecules that mediate cell-cell interaction, and effective help for antibody secretion by B-cells. Also acts as a costimulatory receptor critical for the differentiation of T follicular regulatory cells upon immune challenges such as viral infection. Mechanistically, potentiates TCR-induced calcium flux by augmenting PLCG1 activation and actin remodeling. In addition, activates PI3K signaling pathways independently of calcium flux. Essential both for efficient interaction between T and B-cells and for normal antibody responses to T-cell dependent antigens. Prevents the apoptosis of pre-activated T-cells. Plays a critical role in CD40-mediated class switching of immunoglobin isotypes. The sequence is that of Inducible T-cell costimulator (Icos) from Mus musculus (Mouse).